We begin with the raw amino-acid sequence, 93 residues long: uncharacterized protein (93 aa).

Positions 1–11 (MALMVLMALVG) are cleaved as a signal peptide. Cys12 is lipidated: N-palmitoyl cysteine. Residue Cys12 is the site of S-diacylglycerol cysteine attachment.

It is found in the cell membrane. This is an uncharacterized protein from Escherichia coli O6:K15:H31 (strain 536 / UPEC).